The sequence spans 370 residues: Neutral protease 2 homolog AFUA_4G13750 (370 aa).

An N-terminal signal peptide occupies residues 1-19; sequence MKVTILASAILALINGALA. The propeptide occupies 20-172; that stretch reads LPANTPTLDV…PQAIKLLDRR (153 aa). 2 cysteine pairs are disulfide-bonded: cysteine 178-cysteine 250 and cysteine 257-cysteine 275. Residue histidine 300 participates in Zn(2+) binding. The active site involves glutamate 301. Positions 304 and 315 each coordinate Zn(2+).

Belongs to the peptidase M35 family. Zn(2+) serves as cofactor.

The protein localises to the secreted. It catalyses the reaction Preferential cleavage of bonds with hydrophobic residues in P1'. Also 3-Asn-|-Gln-4 and 8-Gly-|-Ser-9 bonds in insulin B chain.. Secreted metalloproteinase that allows assimilation of proteinaceous substrates. Shows high activities on basic nuclear substrates such as histone and protamine. May be involved in virulence. The protein is Neutral protease 2 homolog AFUA_4G13750 of Aspergillus fumigatus (strain ATCC MYA-4609 / CBS 101355 / FGSC A1100 / Af293) (Neosartorya fumigata).